The sequence spans 247 residues: Synaptogyrin homolog 1 (247 aa).

The MARVEL domain occupies phenylalanine 21 to glutamate 175. The next 4 helical transmembrane spans lie at proline 25–serine 45, cysteine 69–leucine 89, alanine 105–phenylalanine 125, and phenylalanine 151–tryptophan 171. Positions aspartate 206–tyrosine 247 are disordered. The segment covering serine 220 to tyrosine 247 has biased composition (polar residues).

It belongs to the synaptogyrin family. Expressed in a wide variety of neurons and is expressed weakly in the non-neuronal distal tip cells. A punctate pattern was observed in the ventral and dorsal nerve cords and the nerve ring. Weak expression is seen in neuronal cell bodies and commissures.

Its subcellular location is the membrane. In Caenorhabditis elegans, this protein is Synaptogyrin homolog 1 (sng-1).